We begin with the raw amino-acid sequence, 868 residues long: Phospholipase D delta (868 aa).

Residues 1-154 form the C2 domain; the sequence is MAEKVSEDVM…ASGERISGWF (154 aa). Aspartate 216 contacts Ca(2+). The PLD phosphodiesterase 1 domain occupies 368–403; that stretch reads TLFTHHQKCVLVDTQAVGNNRKVTAFIGGLDLCDGR. Catalysis depends on residues histidine 373, lysine 375, and aspartate 380. Residue histidine 373 coordinates a 1,2-diacyl-sn-glycero-3-phosphate. Residues histidine 409 and histidine 440 each coordinate Ca(2+). Glutamine 588 and histidine 718 together coordinate a 1,2-diacyl-sn-glycero-3-phosphate. The PLD phosphodiesterase 2 domain maps to 713 to 740; the sequence is FMIYVHAKGMIVDDEYVLMGSANINQRS. Catalysis depends on residues histidine 718, lysine 720, and aspartate 725. Glutamate 781 lines the Ca(2+) pocket.

The protein belongs to the phospholipase D family. C2-PLD subfamily. As to quaternary structure, interacts with GAPC1 and GAPC2. Increased interaction in the presence of H(2)O(2). Requires Ca(2+) as cofactor. In terms of tissue distribution, expressed in roots, leaves, stems, siliques and flowers. Strongly expressed in the vascular tissues of cotyledons and leaves under dehydration stress conditions. Expression is higher in old leaves than in young leaves. Expressed in leaves and guard cells. The isoform 2 may not be present in siliques.

The protein localises to the cell membrane. It catalyses the reaction a 1,2-diacyl-sn-glycero-3-phosphocholine + H2O = a 1,2-diacyl-sn-glycero-3-phosphate + choline + H(+). With respect to regulation, activated by free oleic acid in a dose-dependent manner and less effectively by other unsaturated fatty acids such as linoleic and linolenic acids. Not activated by the saturated fatty acids stearic and palmitic acids. PIP2 and Ca(2+) stimulate activity by promoting lipid substrate binding to the active site. Activated by H(2)O(2) and by binding to GAPC. Functionally, hydrolyzes glycerol-phospholipids at the terminal phosphodiesteric bond to generate phosphatidic acids (PA). May be involved in PA accumulation in the dehydration stress response and in the transduction of hormonal and environmental signals to the microtubules cytoskeleton. Prefers phosphatidylethanolamine to phosphatidylcholine as substrate. Involved in H(2)O(2) and abscisic acid (ABA)-induced stomatal closure. Involved in nitric oxide (NO) signaling during stomatal closure. Plays a positive role in ABA-promoted senescence. Involved in basal defense and nonhost resistance. This chain is Phospholipase D delta, found in Arabidopsis thaliana (Mouse-ear cress).